Reading from the N-terminus, the 156-residue chain is UPF0336 protein SACE_6876 (156 aa).

The 121-residue stretch at 8 to 128 (IGREYPPTPA…DFLTVRAEIT (121 aa)) folds into the MaoC-like domain.

This sequence belongs to the UPF0336 family.

This Saccharopolyspora erythraea (strain ATCC 11635 / DSM 40517 / JCM 4748 / NBRC 13426 / NCIMB 8594 / NRRL 2338) protein is UPF0336 protein SACE_6876.